The following is a 331-amino-acid chain: Tryptophan--tRNA ligase (331 aa).

ATP-binding positions include 10 to 12 and 18 to 19; these read QPS and GN. Positions 11 to 19 match the 'HIGH' region motif; that stretch reads PSGQLTLGN. Aspartate 133 provides a ligand contact to L-tryptophan. ATP is bound by residues 145-147, valine 184, and 193-197; these read GED and KMSKS. Positions 193–197 match the 'KMSKS' region motif; the sequence is KMSKS.

It belongs to the class-I aminoacyl-tRNA synthetase family. In terms of assembly, homodimer.

It localises to the cytoplasm. It catalyses the reaction tRNA(Trp) + L-tryptophan + ATP = L-tryptophyl-tRNA(Trp) + AMP + diphosphate + H(+). Catalyzes the attachment of tryptophan to tRNA(Trp). The protein is Tryptophan--tRNA ligase of Listeria monocytogenes serotype 4b (strain F2365).